The sequence spans 571 residues: Putative diflavin flavoprotein A 1 (571 aa).

The zinc metallo-hydrolase stretch occupies residues 43–236 (ENGTTYNSFL…PPVQLVATGH (194 aa)). Positions 92, 94, 96, 159, 178, and 236 each coordinate Fe cation. Positions 265–426 (VAIFYAANYG…DLDKALGRLS (162 aa)) constitute a Flavodoxin-like domain. The interval 427–571 (GGLYIITAQK…VHHRKVGNHY (145 aa)) is flavodoxin-reductase-like.

In the N-terminal section; belongs to the zinc metallo-hydrolase group 3 family. The protein in the C-terminal section; belongs to the flavodoxin reductase family. The cofactor is Fe cation.

In terms of biological role, mediates electron transfer from NADH to oxygen, reducing it to water. This modular protein has 3 redox cofactors, in other organisms the same activity requires 2 or 3 proteins. This is Putative diflavin flavoprotein A 1 (dfa1) from Thermosynechococcus vestitus (strain NIES-2133 / IAM M-273 / BP-1).